The chain runs to 363 residues: UDP-N-acetylglucosamine--N-acetylmuramyl-(pentapeptide) pyrophosphoryl-undecaprenol N-acetylglucosamine transferase (363 aa).

UDP-N-acetyl-alpha-D-glucosamine is bound by residues 14 to 16 (TGG), Arg-171, Ser-200, and Gln-290.

Belongs to the glycosyltransferase 28 family. MurG subfamily.

It localises to the cell inner membrane. The enzyme catalyses di-trans,octa-cis-undecaprenyl diphospho-N-acetyl-alpha-D-muramoyl-L-alanyl-D-glutamyl-meso-2,6-diaminopimeloyl-D-alanyl-D-alanine + UDP-N-acetyl-alpha-D-glucosamine = di-trans,octa-cis-undecaprenyl diphospho-[N-acetyl-alpha-D-glucosaminyl-(1-&gt;4)]-N-acetyl-alpha-D-muramoyl-L-alanyl-D-glutamyl-meso-2,6-diaminopimeloyl-D-alanyl-D-alanine + UDP + H(+). Its pathway is cell wall biogenesis; peptidoglycan biosynthesis. Its function is as follows. Cell wall formation. Catalyzes the transfer of a GlcNAc subunit on undecaprenyl-pyrophosphoryl-MurNAc-pentapeptide (lipid intermediate I) to form undecaprenyl-pyrophosphoryl-MurNAc-(pentapeptide)GlcNAc (lipid intermediate II). The sequence is that of UDP-N-acetylglucosamine--N-acetylmuramyl-(pentapeptide) pyrophosphoryl-undecaprenol N-acetylglucosamine transferase from Borrelia garinii subsp. bavariensis (strain ATCC BAA-2496 / DSM 23469 / PBi) (Borreliella bavariensis).